Reading from the N-terminus, the 1059-residue chain is Carbamoyl phosphate synthase large chain (1059 aa).

The segment at 1-401 (MPKRKDIQKV…AMLKAVRSLE (401 aa)) is carboxyphosphate synthetic domain. Positions 129, 169, 175, 176, 208, 210, 215, 241, 242, 243, 284, and 298 each coordinate ATP. Residues 133-327 (KALMERLNEP…IAKMAAKIAV (195 aa)) enclose the ATP-grasp 1 domain. Positions 284, 298, and 300 each coordinate Mg(2+). The Mn(2+) site is built by glutamine 284, glutamate 298, and asparagine 300. Residues 402 to 546 (IGVTGLNDLT…YATYERENES (145 aa)) form an oligomerization domain region. Residues 547 to 929 (VRSKKPSVIV…ALYKAFVASN (383 aa)) are carbamoyl phosphate synthetic domain. The ATP-grasp 2 domain occupies 671 to 861 (DQVIKTLALP…LAQLATRVML (191 aa)). Residues arginine 707, serine 746, leucine 748, glutamate 752, glycine 777, valine 778, histidine 779, serine 780, glutamine 820, and glutamate 832 each coordinate ATP. Mg(2+) is bound by residues glutamine 820, glutamate 832, and asparagine 834. Mn(2+) is bound by residues glutamine 820, glutamate 832, and asparagine 834. Residues 930–1059 (IKVPQYGNVL…SRSFTVNEMK (130 aa)) enclose the MGS-like domain. An allosteric domain region spans residues 930–1059 (IKVPQYGNVL…SRSFTVNEMK (130 aa)).

It belongs to the CarB family. As to quaternary structure, composed of two chains; the small (or glutamine) chain promotes the hydrolysis of glutamine to ammonia, which is used by the large (or ammonia) chain to synthesize carbamoyl phosphate. Tetramer of heterodimers (alpha,beta)4. Requires Mg(2+) as cofactor. The cofactor is Mn(2+).

The catalysed reaction is hydrogencarbonate + L-glutamine + 2 ATP + H2O = carbamoyl phosphate + L-glutamate + 2 ADP + phosphate + 2 H(+). It carries out the reaction hydrogencarbonate + NH4(+) + 2 ATP = carbamoyl phosphate + 2 ADP + phosphate + 2 H(+). It participates in amino-acid biosynthesis; L-arginine biosynthesis; carbamoyl phosphate from bicarbonate: step 1/1. It functions in the pathway pyrimidine metabolism; UMP biosynthesis via de novo pathway; (S)-dihydroorotate from bicarbonate: step 1/3. In terms of biological role, large subunit of the glutamine-dependent carbamoyl phosphate synthetase (CPSase). CPSase catalyzes the formation of carbamoyl phosphate from the ammonia moiety of glutamine, carbonate, and phosphate donated by ATP, constituting the first step of 2 biosynthetic pathways, one leading to arginine and/or urea and the other to pyrimidine nucleotides. The large subunit (synthetase) binds the substrates ammonia (free or transferred from glutamine from the small subunit), hydrogencarbonate and ATP and carries out an ATP-coupled ligase reaction, activating hydrogencarbonate by forming carboxy phosphate which reacts with ammonia to form carbamoyl phosphate. This chain is Carbamoyl phosphate synthase large chain, found in Leuconostoc citreum (strain KM20).